The primary structure comprises 551 residues: Glucans biosynthesis protein D (551 aa).

A signal peptide (tat-type signal) is located at residues 1-32 (MNRRRFLQGSLAMAALSGTTGLSTLFSRAAFA).

This sequence belongs to the OpgD/OpgG family. Post-translationally, predicted to be exported by the Tat system. The position of the signal peptide cleavage has not been experimentally proven.

It is found in the periplasm. It participates in glycan metabolism; osmoregulated periplasmic glucan (OPG) biosynthesis. In terms of biological role, probably involved in the control of the structural glucose backbone of osmoregulated periplasmic glucans (OPGs). This Enterobacter sp. (strain 638) protein is Glucans biosynthesis protein D.